A 585-amino-acid polypeptide reads, in one-letter code: SCF E3 ubiquitin ligase complex F-box protein grrA (585 aa).

Positions 1–10 are enriched in polar residues; that stretch reads MARSRQPTRF. Disordered regions lie at residues 1–34 and 41–60; these read MARS…DTDF and DSQS…QNDP. The segment covering 11 to 25 has biased composition (low complexity); the sequence is SSEAPSESSSSTSPE. The 49-residue stretch at 65–113 folds into the F-box domain; the sequence is PPIAYLPPEILISIFSKLSSPRDLLSCLLVCRIWALNCVGLLWHRPSCN. 13 LRR repeats span residues 147–171, 172–197, 198–223, 224–249, 250–275, 276–301, 302–329, 330–355, 356–381, 382–407, 408–432, 433–465, and 466–491; these read TEDV…TLTN, CRKL…DVSE, LRSL…NITG, CVKV…KLNG, VSQV…DLQE, CKLV…RLAH, CTEI…DLTA, CENI…VLAK, CKFI…HLGH, CSNI…DLAC, CSRL…GLVK, CQLI…HLSY, and CVNL…SLTG.

Part of a SCF E3 ubiquitin ligase complex. As to expression, specifically expressed in ascus mother cells.

It localises to the cytoplasm. Its function is as follows. Involved in meiosis and required for ascospore formation. Involved in substrate recognition in ubiquitin-dependent degradation. This is SCF E3 ubiquitin ligase complex F-box protein grrA (grrA) from Emericella nidulans (strain FGSC A4 / ATCC 38163 / CBS 112.46 / NRRL 194 / M139) (Aspergillus nidulans).